A 194-amino-acid chain; its full sequence is NADH-quinone oxidoreductase subunit B 1 (194 aa).

The span at 1–12 shows a compositional bias: polar residues; the sequence is MGVTPVSNQPLV. Residues 1-23 form a disordered region; sequence MGVTPVSNQPLVAQQPKGIIDPS. The [4Fe-4S] cluster site is built by Cys73, Cys74, Cys138, and Cys168.

The protein belongs to the complex I 20 kDa subunit family. As to quaternary structure, NDH-1 is composed of 14 different subunits. Subunits NuoB, C, D, E, F, and G constitute the peripheral sector of the complex. It depends on [4Fe-4S] cluster as a cofactor.

The protein resides in the cell inner membrane. It carries out the reaction a quinone + NADH + 5 H(+)(in) = a quinol + NAD(+) + 4 H(+)(out). NDH-1 shuttles electrons from NADH, via FMN and iron-sulfur (Fe-S) centers, to quinones in the respiratory chain. The immediate electron acceptor for the enzyme in this species is believed to be ubiquinone. Couples the redox reaction to proton translocation (for every two electrons transferred, four hydrogen ions are translocated across the cytoplasmic membrane), and thus conserves the redox energy in a proton gradient. The chain is NADH-quinone oxidoreductase subunit B 1 from Rhizobium etli (strain ATCC 51251 / DSM 11541 / JCM 21823 / NBRC 15573 / CFN 42).